Here is a 217-residue protein sequence, read N- to C-terminus: Cytidylate kinase (217 aa).

10–18 contributes to the ATP binding site; that stretch reads GPAGAGKST.

It belongs to the cytidylate kinase family. Type 1 subfamily.

It is found in the cytoplasm. The enzyme catalyses CMP + ATP = CDP + ADP. It carries out the reaction dCMP + ATP = dCDP + ADP. This Alkaliphilus oremlandii (strain OhILAs) (Clostridium oremlandii (strain OhILAs)) protein is Cytidylate kinase.